Consider the following 531-residue polypeptide: MFKAIRRVFTMIPRIQLTEKETRICNLLKDYTAHYNSLHYGQEPLTLRITGGWVRDKLLGQGSHDLDIAINIMSGEEFATGLNGYLLEHFDKYGVKPHSIHKIDKNPEKSKHLETATTKLFDVEVDFVNLRSEEYTEDSRIPTTQFGTPEEDALRRDATLNALFYNIQQDAVEDFTKRGWQDLQDGVLRTPLPARQTFLDDPLRVLRLIRFASRFNFNIEAGVLKEMHDPEINEAFNNKISRERIGVEMEKILVGPNPILGLKLIQRTHLENVIFLWHGDQSVIEYNRKNWPQTKDVEDIYKKGIFNHHLKNFIHHYKDFLSRYLKLRQAIETKDKSFQQNFLLASILIPMADLKIIALPKKKLNNTLPVSESIVREGLKFNKASSIVVARCVENIAAYNSMVEKYLQSGDLKRSEVGTFLRELRGDWEIVHYVSLMDQYLKYISRKDNVVNIIDKYDRFWNYIQEQNLQDSDKMVPIIDGKRMVKILETKPGPWLGKINDEVILWQFDHPQGTEQELISFIKSILPNYLQ.

This sequence belongs to the tRNA nucleotidyltransferase/poly(A) polymerase family.

It is found in the mitochondrion. The protein resides in the cytoplasm. It localises to the nucleus. It catalyses the reaction a tRNA precursor + 2 CTP + ATP = a tRNA with a 3' CCA end + 3 diphosphate. Its function is as follows. Nucleotidyltransferase that catalyzes the addition and repair of the essential 3'-terminal CCA sequence in tRNAs, which is necessary for the attachment of amino acids to the 3' terminus of tRNA molecules, using CTP and ATP as substrates. tRNA 3'-terminal CCA addition is required both for tRNA processing and repair. Also involved in tRNA surveillance by mediating tandem CCA addition to generate a CCACCA at the 3' terminus of unstable tRNAs. While stable tRNAs receive only 3'-terminal CCA, unstable tRNAs are marked with CCACCA and rapidly degraded. The structural flexibility of RNA controls the choice between CCA versus CCACCA addition: following the first CCA addition cycle, nucleotide-binding to the active site triggers a clockwise screw motion, producing torque on the RNA. This ejects stable RNAs, whereas unstable RNAs are refolded while bound to the enzyme and subjected to a second CCA catalytic cycle. This Candida glabrata (strain ATCC 2001 / BCRC 20586 / JCM 3761 / NBRC 0622 / NRRL Y-65 / CBS 138) (Yeast) protein is CCA tRNA nucleotidyltransferase, mitochondrial (CCA1).